Consider the following 394-residue polypeptide: Argininosuccinate synthase (394 aa).

8-16 is a binding site for ATP; that stretch reads AYSGGLDTS. Residues Tyr86 and Ser91 each coordinate L-citrulline. Gly116 provides a ligand contact to ATP. Residues Thr118, Asn122, and Asp123 each contribute to the L-aspartate site. Asn122 provides a ligand contact to L-citrulline. Residues Arg126, Ser172, Ser181, Glu257, and Tyr269 each coordinate L-citrulline.

This sequence belongs to the argininosuccinate synthase family. Type 1 subfamily. Homotetramer.

The protein resides in the cytoplasm. The enzyme catalyses L-citrulline + L-aspartate + ATP = 2-(N(omega)-L-arginino)succinate + AMP + diphosphate + H(+). It functions in the pathway amino-acid biosynthesis; L-arginine biosynthesis; L-arginine from L-ornithine and carbamoyl phosphate: step 2/3. The polypeptide is Argininosuccinate synthase (Methanosarcina mazei (strain ATCC BAA-159 / DSM 3647 / Goe1 / Go1 / JCM 11833 / OCM 88) (Methanosarcina frisia)).